A 379-amino-acid chain; its full sequence is MSSSTIKTLAVAVTLLHLTRLALSTCPAACHCPLEAPKCAPGVGLVRDGCGCCKVCAKQLNEDCSKTQPCDHTKGLECNFGASSTALKGICRAQSEGRPCEYNSRIYQNGESFQPNCKHQCTCIDGAVGCIPLCPQELSLPNLGCPNPRLVKVSGQCCEEWVCDEDSIKDSLDDQDDLLGFDASEVELTRNNELIAIGKGSSLKRLPVFGTEPRVLYNPLHAHGQKCIVQTTSWSQCSKSCGTGISTRVTNDNSECRLVKETRICEVRPCGQPVYSSLKKGKKCSKTKKSPEPVRFTYAGCSSVKKYRPKYCGSCVDGRCCTPLQTRTVKMRFRCEDGEMFSKNVMMIQSCKCNYNCPHPNEASFRLYSLFNDIHKFRD.

The signal sequence occupies residues 1–24; sequence MSSSTIKTLAVAVTLLHLTRLALS. Positions 25–94 constitute an IGFBP N-terminal domain; that stretch reads TCPAACHCPL…TALKGICRAQ (70 aa). 6 cysteine pairs are disulfide-bonded: C26–C50, C30–C52, C32–C53, C39–C56, C64–C78, and C70–C91. Positions 98-164 constitute a VWFC domain; the sequence is RPCEYNSRIY…GQCCEEWVCD (67 aa). S184 bears the Phosphoserine mark. In terms of domain architecture, TSP type-1 spans 226 to 271; that stretch reads KCIVQTTSWSQCSKSCGTGISTRVTNDNSECRLVKETRICEVRPCG. The segment at 277 to 313 is heparin-binding; the sequence is SLKKGKKCSKTKKSPEPVRFTYAGCSSVKKYRPKYCG. 5 disulfides stabilise this stretch: C284-C321, C301-C335, C312-C351, C315-C353, and C320-C357. The CTCK domain occupies 284-358; it reads CSKTKKSPEP…QSCKCNYNCP (75 aa).

Belongs to the CCN family. As to quaternary structure, interaction with integrins is heparin- and cell-type-dependent and promotes cell adhesion.

It localises to the secreted. Its function is as follows. Promotes cell proliferation, chemotaxis, angiogenesis and cell adhesion. Appears to play a role in wound healing by up-regulating, in skin fibroblasts, the expression of a number of genes involved in angiogenesis, inflammation and matrix remodeling including VEGA-A, VEGA-C, MMP1, MMP3, TIMP1, uPA, PAI-1 and integrins alpha-3 and alpha-5. CCN1-mediated gene regulation is dependent on heparin-binding. Down-regulates the expression of alpha-1 and alpha-2 subunits of collagen type-1. Promotes cell adhesion and adhesive signaling through integrin alpha-6/beta-1, cell migration through integrin alpha-1/beta-5 and cell proliferation through integrin alpha-v/beta-3. The sequence is that of CCN family member 1 from Rattus norvegicus (Rat).